The sequence spans 753 residues: Nuclear hormone receptor family member daf-12 (753 aa).

The interval 1–109 is disordered; sequence MGTNGGVIAE…PDDGLLDSSE (109 aa). Over residues 20 to 29 the composition is skewed to basic and acidic residues; the sequence is NPDKVEEPVV. Residues 30–44 are compositionally biased toward basic residues; it reads RRKRVTRRRHRRIHS. The segment at residues 115 to 190 is a DNA-binding region (nuclear receptor); that stretch reads QKTCRVCGDH…VGMKKEWILN (76 aa). 2 consecutive NR C4-type zinc fingers follow at residues 118 to 138 and 154 to 173; these read CRVC…CESC and CPYS…CQKC. A Nuclear localization signal motif is present at residues 191–206; the sequence is EEQLRRRKNSRLNNTG. Disordered stretches follow at residues 198-251, 266-314, and 376-410; these read KNSR…TINP, NAMP…GYDP, and GHPM…EKNH. Polar residues predominate over residues 201-211; that stretch reads RLNNTGTCNKR. Low complexity predominate over residues 212 to 227; the sequence is SQPGNQQSPQGPNQQP. Composition is skewed to polar residues over residues 285-301 and 394-410; these read PVGS…SLTM and MSLS…EKNH. The NR LBD domain maps to 516 to 753; that stretch reads AELKALDAVR…ELPGEFFKIK (238 aa).

The protein belongs to the nuclear hormone receptor family. As to quaternary structure, interacts with din-1 isoform d. Expressed throughout muscles of the pharynx. Expressed in epidermal seam cells, the vulva, head neurons, mature spermatheca, uterus and intestine.

The protein resides in the nucleus. Its function is as follows. Nuclear receptor which binds directly to response elements in target gene promoters. Activity is modulated by binding of steroid hormone ligands that include dafachronic acids. Regulates expression of genes involved in postembryonic development and the dauer diapause, in response to environmental cues. Inhibits the expression of let-7 family members when bound to corepressor din-1s which is an isoform of din-1. Plays a role in controlling the timing of seam cell development during the larval stages. Has a role in the immune response to bacterial infection, via regulation of let-7 miRNAs. Controls expression of genes that promote the aerobic catabolism of fatty acids for reproductive growth. May be involved in thermotolerance. This Caenorhabditis elegans protein is Nuclear hormone receptor family member daf-12.